Reading from the N-terminus, the 717-residue chain is Delta-1-pyrroline-5-carboxylate synthase A (717 aa).

A glutamate 5-kinase region spans residues 1-296 (MEELDRSRAF…WAPITDSNAR (296 aa)). Ser60, Asp157, and Asn176 together coordinate substrate. ATP contacts are provided by residues 196–197 (SD) and 236–242 (RGGMTAK). Residues 297–717 (DMAVAARESS…YTHQDIPIQA (421 aa)) are gamma-glutamyl phosphate reductase.

It in the N-terminal section; belongs to the glutamate 5-kinase family. This sequence in the C-terminal section; belongs to the gamma-glutamyl phosphate reductase family.

It carries out the reaction L-glutamate + ATP = L-glutamyl 5-phosphate + ADP. It catalyses the reaction L-glutamate 5-semialdehyde + phosphate + NADP(+) = L-glutamyl 5-phosphate + NADPH + H(+). It functions in the pathway amino-acid biosynthesis; L-proline biosynthesis; L-glutamate 5-semialdehyde from L-glutamate: step 1/2. Its pathway is amino-acid biosynthesis; L-proline biosynthesis; L-glutamate 5-semialdehyde from L-glutamate: step 2/2. In terms of biological role, P5CS plays a key role in proline biosynthesis, leading to osmoregulation in plants. This is Delta-1-pyrroline-5-carboxylate synthase A (P5CSA) from Arabidopsis thaliana (Mouse-ear cress).